Reading from the N-terminus, the 213-residue chain is StAR-related lipid transfer protein 5 (213 aa).

In terms of domain architecture, START spans 1–213 (MDPSWATQES…LQKAVRKFHH (213 aa)).

As to expression, expressed in most tissues, with highest levels in liver and in kidney.

Its function is as follows. May be involved in the intracellular transport of sterols or other lipids. May bind cholesterol or other sterols. This is StAR-related lipid transfer protein 5 (Stard5) from Mus musculus (Mouse).